The following is a 73-amino-acid chain: Omega-conotoxin CVID (73 aa).

The N-terminal stretch at 1 to 22 (MKLTCVVIVAVLLLTACQLITA) is a signal peptide. Residues 23 to 45 (DDSRGTQKHRALRSDTKLSMSTR) constitute a propeptide that is removed on maturation. Disulfide bonds link Cys-46/Cys-61, Cys-53/Cys-65, and Cys-60/Cys-72. Cys-72 carries the post-translational modification Cysteine amide.

This sequence belongs to the conotoxin O1 superfamily. As to expression, expressed by the venom duct.

The protein resides in the secreted. Functionally, omega-conotoxins act at presynaptic membranes, they bind and block voltage-gated calcium channels. This toxin inhibits neurotransmitter release, it blocks N-type calcium channels, probably a N-type (Cav2.2/CACNA1B) calcium channel variant. The chain is Omega-conotoxin CVID from Conus catus (Cat cone).